A 363-amino-acid chain; its full sequence is Histone-lysine N-methyltransferase ASHH3 (363 aa).

One can recognise an AWS domain in the interval 63–114 (DDGIFCSCSSSSPGSSSTVCGSNCHCGMLFSSCSSSCKCGSECNNKPFQQRH). Residues 116-233 (KKMKLIQTEK…KGEHLTYDYQ (118 aa)) enclose the SET domain. The region spanning 239–255 (ADQDCHCGAVGCRRKLG) is the Post-SET domain.

This sequence belongs to the class V-like SAM-binding methyltransferase superfamily. Histone-lysine methyltransferase family. SET2 subfamily.

It localises to the nucleus. Its subcellular location is the chromosome. The protein localises to the centromere. It carries out the reaction L-lysyl-[histone] + S-adenosyl-L-methionine = N(6)-methyl-L-lysyl-[histone] + S-adenosyl-L-homocysteine + H(+). In terms of biological role, histone methyltransferase. In Arabidopsis thaliana (Mouse-ear cress), this protein is Histone-lysine N-methyltransferase ASHH3 (ASHH3).